The sequence spans 115 residues: Large ribosomal subunit protein uL18 (115 aa).

It belongs to the universal ribosomal protein uL18 family. As to quaternary structure, part of the 50S ribosomal subunit; part of the 5S rRNA/L5/L18/L25 subcomplex. Contacts the 5S and 23S rRNAs.

This is one of the proteins that bind and probably mediate the attachment of the 5S RNA into the large ribosomal subunit, where it forms part of the central protuberance. The protein is Large ribosomal subunit protein uL18 of Vesicomyosocius okutanii subsp. Calyptogena okutanii (strain HA).